Reading from the N-terminus, the 336-residue chain is Holliday junction branch migration complex subunit RuvB (336 aa).

The tract at residues 4–184 (ADRLISAGTT…FGIVQRLEFY (181 aa)) is large ATPase domain (RuvB-L). Residues Ile23, Arg24, Gly65, Lys68, Thr69, Thr70, 131–133 (EDY), Arg174, Tyr184, and Arg221 each bind ATP. Position 69 (Thr69) interacts with Mg(2+). The interval 185–255 (QVPDLQYIVS…IAAQALDMLN (71 aa)) is small ATPAse domain (RuvB-S). The head domain (RuvB-H) stretch occupies residues 258 to 336 (AEGFDYMDRK…HFGITPPEMP (79 aa)). DNA-binding residues include Arg294, Arg313, and Arg318.

It belongs to the RuvB family. As to quaternary structure, homohexamer. Forms an RuvA(8)-RuvB(12)-Holliday junction (HJ) complex. HJ DNA is sandwiched between 2 RuvA tetramers; dsDNA enters through RuvA and exits via RuvB. An RuvB hexamer assembles on each DNA strand where it exits the tetramer. Each RuvB hexamer is contacted by two RuvA subunits (via domain III) on 2 adjacent RuvB subunits; this complex drives branch migration. In the full resolvosome a probable DNA-RuvA(4)-RuvB(12)-RuvC(2) complex forms which resolves the HJ.

The protein localises to the cytoplasm. It catalyses the reaction ATP + H2O = ADP + phosphate + H(+). Functionally, the RuvA-RuvB-RuvC complex processes Holliday junction (HJ) DNA during genetic recombination and DNA repair, while the RuvA-RuvB complex plays an important role in the rescue of blocked DNA replication forks via replication fork reversal (RFR). RuvA specifically binds to HJ cruciform DNA, conferring on it an open structure. The RuvB hexamer acts as an ATP-dependent pump, pulling dsDNA into and through the RuvAB complex. RuvB forms 2 homohexamers on either side of HJ DNA bound by 1 or 2 RuvA tetramers; 4 subunits per hexamer contact DNA at a time. Coordinated motions by a converter formed by DNA-disengaged RuvB subunits stimulates ATP hydrolysis and nucleotide exchange. Immobilization of the converter enables RuvB to convert the ATP-contained energy into a lever motion, pulling 2 nucleotides of DNA out of the RuvA tetramer per ATP hydrolyzed, thus driving DNA branch migration. The RuvB motors rotate together with the DNA substrate, which together with the progressing nucleotide cycle form the mechanistic basis for DNA recombination by continuous HJ branch migration. Branch migration allows RuvC to scan DNA until it finds its consensus sequence, where it cleaves and resolves cruciform DNA. The protein is Holliday junction branch migration complex subunit RuvB of Shigella flexneri serotype 5b (strain 8401).